The primary structure comprises 503 residues: 2-phosphoxylose phosphatase 1 (503 aa).

Residues 1–6 (MLARSR) lie on the Cytoplasmic side of the membrane. A helical; Signal-anchor for type II membrane protein membrane pass occupies residues 7–27 (FILVLVVGALLAVLSFSLQYL). The Lumenal portion of the chain corresponds to 28-503 (HLIPTNPVAE…YQQACHQTVL (476 aa)). Residues 38–63 (QRSAGRSRKRVNPVLHTDPPAPDPIR) form a disordered region. N-linked (GlcNAc...) asparagine glycosylation is present at Asn73. The active-site Nucleophile is the His98. The N-linked (GlcNAc...) asparagine glycan is linked to Asn365. Residue Asp396 is the Proton donor of the active site. N-linked (GlcNAc...) asparagine glycosylation is present at Asn490.

It belongs to the histidine acid phosphatase family.

The protein localises to the golgi apparatus membrane. It carries out the reaction 3-O-[beta-D-GlcA-(1-&gt;3)-beta-D-Gal-(1-&gt;3)-beta-D-Gal-(1-&gt;4)-beta-D-2-O-P-Xyl]-L-seryl-[protein] + H2O = 3-O-(beta-D-GlcA-(1-&gt;3)-beta-D-Gal-(1-&gt;3)-beta-D-Gal-(1-&gt;4)-beta-D-Xyl)-L-seryl-[protein] + phosphate. Responsible for the 2-O-dephosphorylation of xylose in the glycosaminoglycan-protein linkage region of proteoglycans thereby regulating the amount of mature glycosaminoglycan (GAG) chains. Sulfated glycosaminoglycans (GAGs), including heparan sulfate and chondroitin sulfate, are synthesized on the so-called common GAG-protein linkage region (GlcUAbeta1-3Galbeta1-3Galbeta1-4Xylbeta1-O-Ser) of core proteins, which is formed by the stepwise addition of monosaccharide residues by the respective specific glycosyltransferases. The polypeptide is 2-phosphoxylose phosphatase 1 (Danio rerio (Zebrafish)).